A 366-amino-acid polypeptide reads, in one-letter code: MKFTDKTTQADTQRTITKDGFLVVPATISKVGVFDYLATELGLKEDGIKKVARTEKSLFSDETIKSFENATLTVGHLKDGVNAKNWKQLSVGVVRNVKRVGDELTAEAWIYDEQAIKTVQEHGVEQLSCGYDCDIKPSTVQDADFEMSPMIGNHVAIVAKGRCGGSVKLADEDKTIMGKTAKILDAFLGAFGIKLSDEQKKQIEDEEKSGSEEGKEPKGEQPTKPKEKKSEPENKKEDDVEKEELEKSLKAKDEEIQQLKDAQAKRDAEVKQAAVLADAKTAFKEVNFADNATVREIQESAVVAQGIFTKDEAAKLSDEEISGAYQTAKVVVAKLADERKSLGNILLGDAEPKAAPKIDFNKTYNS.

A disordered region spans residues 199–267 (QKKQIEDEEK…QLKDAQAKRD (69 aa)).

This is an uncharacterized protein from Haemophilus influenzae (strain ATCC 51907 / DSM 11121 / KW20 / Rd).